The sequence spans 481 residues: Glutamate--tRNA ligase (481 aa).

The short motif at 9 to 19 is the 'HIGH' region element; that stretch reads PSPTGNLHIGT. 4 residues coordinate Zn(2+): cysteine 98, cysteine 100, histidine 125, and aspartate 127. A 'KMSKS' region motif is present at residues 248–252; the sequence is KLSKR. Lysine 251 is a binding site for ATP.

Belongs to the class-I aminoacyl-tRNA synthetase family. Glutamate--tRNA ligase type 1 subfamily. Monomer. The cofactor is Zn(2+).

The protein localises to the cytoplasm. It catalyses the reaction tRNA(Glu) + L-glutamate + ATP = L-glutamyl-tRNA(Glu) + AMP + diphosphate. In terms of biological role, catalyzes the attachment of glutamate to tRNA(Glu) in a two-step reaction: glutamate is first activated by ATP to form Glu-AMP and then transferred to the acceptor end of tRNA(Glu). This chain is Glutamate--tRNA ligase, found in Synechococcus elongatus (strain ATCC 33912 / PCC 7942 / FACHB-805) (Anacystis nidulans R2).